Reading from the N-terminus, the 41-residue chain is Hadrurin (41 aa).

It belongs to the non-disulfide-bridged peptide (NDBP) superfamily. Long chain multifunctional peptide (group 2) family. As to expression, expressed by the venom gland.

The protein localises to the secreted. Its function is as follows. Antimicrobial activity against S.typhimurium, K.pneumoniae, E.cloacae, P.aeruginosa, E.coli and S.marcescens. Also shows hemolytic activity when tested in human erythrocytes. This chain is Hadrurin, found in Hoffmannihadrurus aztecus (Mexican scorpion).